The primary structure comprises 267 residues: Ubiquinone biosynthesis protein COQ4 homolog, mitochondrial (267 aa).

The Zn(2+) site is built by histidine 170, aspartate 171, histidine 174, and glutamate 186.

Belongs to the COQ4 family. In terms of assembly, component of a multi-subunit COQ enzyme complex. It depends on Zn(2+) as a cofactor.

It localises to the mitochondrion inner membrane. It carries out the reaction a 4-hydroxy-3-methoxy-5-(all-trans-polyprenyl)benzoate + H(+) = a 2-methoxy-6-(all-trans-polyprenyl)phenol + CO2. Its pathway is cofactor biosynthesis; ubiquinone biosynthesis. Lyase that catalyzes the C1-decarboxylation of 4-hydroxy-3-methoxy-5-(all-trans-polyprenyl)benzoic acid into 2-methoxy-6-(all-trans-polyprenyl)phenol during ubiquinone biosynthesis. This chain is Ubiquinone biosynthesis protein COQ4 homolog, mitochondrial, found in Drosophila pseudoobscura pseudoobscura (Fruit fly).